Reading from the N-terminus, the 992-residue chain is Disks large-associated protein 4 (992 aa).

Over residues 1 to 20 the composition is skewed to basic and acidic residues; the sequence is MKGLGDSRPRHLSDSLDPPH. Disordered regions lie at residues 1–31 and 157–225; these read MKGL…DRNP and MEGT…PASG. Residues 162 to 171 show a composition bias toward gly residues; the sequence is GKVGGNGSKK. A compositionally biased stretch (basic and acidic residues) spans 172 to 194; the sequence is GGLEDGKGRRAKSKERAKAGEPK. Over residues 199–208 the composition is skewed to polar residues; the sequence is SNISGWWSSD. Residues S206 and S207 each carry the phosphoserine modification. R290 carries the post-translational modification Omega-N-methylarginine. Positions 342 to 396 are disordered; sequence TTLLSPRDMDSTAEGPIPCRRMRSGSYIKAMGDEDSDESGGGSPKPSPKTAARRQ. Residues S377, S380, S384, S388, S405, S415, and S421 each carry the phosphoserine modification. Disordered stretches follow at residues 527–751, 763–798, and 915–992; these read SVSL…GPRQ, SYGD…AQPG, and TPEK…QTRL. Low complexity predominate over residues 528–554; sequence VSLQSLSPPPSTGSLSNSRTLPSSSCL. The span at 576–591 shows a compositional bias: polar residues; sequence VTVQSSTESAQDTYLD. A phosphoserine mark is found at S580, S581, S609, S611, S665, and S744. The segment covering 600 to 620 has biased composition (low complexity); the sequence is TSQSGLSNSSDSLDSSTRPPS. T915 is subject to Phosphothreonine. Basic and acidic residues-rich tracts occupy residues 915 to 925 and 940 to 958; these read TPEKRKEEKKP and VSRD…EARK. The segment covering 969-978 has biased composition (polar residues); sequence VRQNSATESA. A Phosphoserine modification is found at S973.

The protein belongs to the SAPAP family. In terms of assembly, interacts with DLG1 and DLG4/PSD-95.

It localises to the membrane. In terms of biological role, may play a role in the molecular organization of synapses and neuronal cell signaling. Could be an adapter protein linking ion channel to the subsynaptic cytoskeleton. May induce enrichment of PSD-95/SAP90 at the plasma membrane. This is Disks large-associated protein 4 (Dlgap4) from Mus musculus (Mouse).